Consider the following 214-residue polypeptide: Adenylate kinase (214 aa).

An ATP-binding site is contributed by 10 to 15 (GAGKGT). The segment at 30-59 (STGDMLRAAVKAGTPLGLEAKKVMDAGQLV) is NMP. AMP is bound by residues threonine 31, arginine 36, 57 to 59 (QLV), 85 to 88 (GFPR), and glutamine 92. The interval 122–159 (GRRVHPGSGRVYHIVFNQPKVEGKDDVTGEDLAIRPDD) is LID. ATP-binding positions include arginine 123 and 132–133 (VY). Residues arginine 156 and arginine 167 each coordinate AMP. Glutamine 200 is a binding site for ATP.

It belongs to the adenylate kinase family. Monomer.

It is found in the cytoplasm. It catalyses the reaction AMP + ATP = 2 ADP. The protein operates within purine metabolism; AMP biosynthesis via salvage pathway; AMP from ADP: step 1/1. Functionally, catalyzes the reversible transfer of the terminal phosphate group between ATP and AMP. Plays an important role in cellular energy homeostasis and in adenine nucleotide metabolism. The chain is Adenylate kinase from Shewanella halifaxensis (strain HAW-EB4).